Reading from the N-terminus, the 1360-residue chain is Probable inactive protein kinase DDB_G0270444 (1360 aa).

4 WD repeats span residues 44–83, 109–152, 166–205, and 208–247; these read SSKR…IKQL, IRNI…AVYN, TTSA…IMGT, and GHSR…QITG. A Protein kinase domain is found at 636-954; sequence EKSIQTYLSN…IEQALSHPFI (319 aa). Low complexity predominate over residues 959-979; it reads KQQQQQQQQKQQQQQQQQQQQ. Disordered regions lie at residues 959-989, 1258-1311, and 1331-1360; these read KQQQ…DSLT, IISE…VEEE, and EVEE…SNDF. Coiled-coil stretches lie at residues 1014–1269 and 1297–1352; these read SKIK…QEGE and NASD…QVED. Residues 1291 to 1300 show a composition bias toward basic and acidic residues; that stretch reads LERDNKNASD. Acidic residues-rich tracts occupy residues 1301–1311 and 1331–1354; these read HDDEQQFVEEE and EVEE…EDDT.

This sequence belongs to the protein kinase superfamily. CMGC Ser/Thr protein kinase family.

In Dictyostelium discoideum (Social amoeba), this protein is Probable inactive protein kinase DDB_G0270444.